We begin with the raw amino-acid sequence, 445 residues long: POU domain, class 3, transcription factor 2 (445 aa).

Disordered regions lie at residues 63–173 (TALS…WRSA), 203–269 (LGAG…TPTS), 336–361 (EADSSSGSPTSIDKIASQGRKRKKRT), and 411–445 (EKRMTPPGGTLPGAEDVYGGSRDTPPHHGVQTPVQ). The span at 68 to 90 (GGSGGGGGGGGGGGGGGGGGGDG) shows a compositional bias: gly residues. The span at 125-151 (QQQHQQQQQQQQQQQQQQQQQQQQQQQ) shows a compositional bias: low complexity. The segment covering 217–226 (LRDAHDEPHH) has biased composition (basic and acidic residues). Over residues 227–237 (ADHHPHPHSHP) the composition is skewed to basic residues. Residues 239-253 (QQPPPPPPPQGPPGH) show a composition bias toward pro residues. One can recognise a POU-specific domain in the interval 264 to 338 (EDTPTSDDLE…LLNKWLEEAD (75 aa)). Serine 343 carries the post-translational modification Phosphoserine. Residues 356–415 (KRKKRTSIEVSVKGALESHFLKCPKPSAQEITSLADSLQLEKEVVRVWFCNRRQKEKRMT) constitute a DNA-binding region (homeobox).

Belongs to the POU transcription factor family. Class-3 subfamily. In terms of assembly, interacts with PQBP1. Interaction with ISL1. Expressed specifically at high levels in the brain.

The protein localises to the nucleus. In terms of biological role, transcription factor that plays a key role in neuronal differentiation. Binds preferentially to the recognition sequence which consists of two distinct half-sites, ('GCAT') and ('TAAT'), separated by a non-conserved spacer region of 0, 2, or 3 nucleotides. Acts as a transcriptional activator when binding cooperatively with SOX4, SOX11, or SOX12 to gene promoters. The combination of three transcription factors, ASCL1, POU3F2/BRN2 and MYT1L, is sufficient to reprogram fibroblasts and other somatic cells into induced neuronal (iN) cells in vitro. Acts downstream of ASCL1, accessing chromatin that has been opened by ASCL1, and promotes transcription of neuronal genes. This Rattus norvegicus (Rat) protein is POU domain, class 3, transcription factor 2 (Pou3f2).